The primary structure comprises 376 residues: Chaperone protein DnaJ (376 aa).

In terms of domain architecture, J spans 5–70 (DYYEILGVSK…QKRAAYDQYG (66 aa)). The CR-type zinc finger occupies 131–209 (GVTKEIRIPT…CHGHGRVERS (79 aa)). Residues Cys144, Cys147, Cys161, Cys164, Cys183, Cys186, Cys197, and Cys200 each contribute to the Zn(2+) site. CXXCXGXG motif repeat units follow at residues 144–151 (CDVCHGSG), 161–168 (CPTCHGSG), 183–190 (CPHCQGRG), and 197–204 (CNKCHGHG).

Belongs to the DnaJ family. As to quaternary structure, homodimer. The cofactor is Zn(2+).

Its subcellular location is the cytoplasm. Participates actively in the response to hyperosmotic and heat shock by preventing the aggregation of stress-denatured proteins and by disaggregating proteins, also in an autonomous, DnaK-independent fashion. Unfolded proteins bind initially to DnaJ; upon interaction with the DnaJ-bound protein, DnaK hydrolyzes its bound ATP, resulting in the formation of a stable complex. GrpE releases ADP from DnaK; ATP binding to DnaK triggers the release of the substrate protein, thus completing the reaction cycle. Several rounds of ATP-dependent interactions between DnaJ, DnaK and GrpE are required for fully efficient folding. Also involved, together with DnaK and GrpE, in the DNA replication of plasmids through activation of initiation proteins. The sequence is that of Chaperone protein DnaJ from Escherichia coli O157:H7 (strain EC4115 / EHEC).